Here is a 690-residue protein sequence, read N- to C-terminus: MDQDYKAHFKVFCSEVREWEKIHVVGSLPVLGEWNPRKSFPLTKSTDEENTFHAIVSVPSSIKEFNFRYIRVMYLDPSENNTSEPIMVLSKWETFNNARTCLIGVESQDGVARKNITDQFGSYSGKTQITDGWILNEKESVVYFRIHGEALKFFAKSYANKEYRLKVEPFDVRYSEMFSYTRKDITDRRGVWRHSSVYASMSIDGDDVVNLPTPSLPCFSNTDLSVLTREDPIFGDQYFNGSVFRNDQDYLVFRTRTVSLQNLAFRIEFYHGEKRCALSYVLPSSMSGTHGATVSPVIGLSSAPVGHINVNYMIVKRNKYTDQNLDIDSMKTTFGRYWRKRNRMLQIGHRGMGSSYTKNIGQRENTIFSLNEAARRGADYVEMDVQLTKDLKTVVYHDFHVLVAVAGRDSPSSTPTAAGENKSLHEIAIKDLTLAQLNLLHFEHISRANGSSAESPVALSVTPSKTETDELHVPFPSLAQVLRHVDENVGLNIEIKYPMYMQDGSHECQGYFEQNKFVDIILAEVAEHAGNRRIIFSCFEPDICTMITKKQHKYPVSFLVVGATNRYMPFQDIRSDCSKIAANFAAGCELLGVNFHSEELLIDQKPIEIAEKYGLIKFVWGDDLNSKEVQKHFRDEMNVDGLIFDRIGEDEVLKQNVFVVENHNRSSLFARSQHNSRSPSMSRRCMSTVE.

The region spanning 1 to 122 (MDQDYKAHFK…RKNITDQFGS (122 aa)) is the CBM20 domain. Residues 344–654 (MLQIGHRGMG…DRIGEDEVLK (311 aa)) enclose the GP-PDE domain. The segment at 670 to 690 (ARSQHNSRSPSMSRRCMSTVE) is disordered. Over residues 676–690 (SRSPSMSRRCMSTVE) the composition is skewed to low complexity.

It belongs to the glycerophosphoryl diester phosphodiesterase family.

This Caenorhabditis elegans protein is Putative glycerophosphocholine phosphodiesterase GPCPD1 homolog 1.